A 429-amino-acid polypeptide reads, in one-letter code: Cytochrome P450 BJ-3 (429 aa).

Cys-376 serves as a coordination point for heme.

The protein belongs to the cytochrome P450 family. Requires heme as cofactor.

Its function is as follows. Cytochromes P450 are a group of heme-thiolate monooxygenases. They oxidize a variety of structurally unrelated compounds, including steroids, fatty acids, and xenobiotics. This Bradyrhizobium diazoefficiens (strain JCM 10833 / BCRC 13528 / IAM 13628 / NBRC 14792 / USDA 110) protein is Cytochrome P450 BJ-3 (cyp114).